A 33-amino-acid polypeptide reads, in one-letter code: Cytochrome b6-f complex subunit 7 (33 aa).

A helical membrane pass occupies residues 5–25 (IFNTAVITFTLVLVGLGAGYL).

Belongs to the PetM family. The 4 large subunits of the cytochrome b6-f complex are cytochrome b6, subunit IV (17 kDa polypeptide, PetD), cytochrome f and the Rieske protein, while the 4 small subunits are PetG, PetL, PetM and PetN. The complex functions as a dimer.

The protein resides in the cellular thylakoid membrane. Its function is as follows. Component of the cytochrome b6-f complex, which mediates electron transfer between photosystem II (PSII) and photosystem I (PSI), cyclic electron flow around PSI, and state transitions. The polypeptide is Cytochrome b6-f complex subunit 7 (Thermosynechococcus vestitus (strain NIES-2133 / IAM M-273 / BP-1)).